A 213-amino-acid polypeptide reads, in one-letter code: MILSLDRQIPLSTLSEINKYIHKVKIGYPLILENIEYLDDIVKLHWDEIIFDLKLADIDNTMVLIVSKFINYADSFIAHSFIGIEGALDKLSEFLKNQNKSLYLVLSMSHKGWNDEFYPYLKNIAKTIDPKGFVVGATRPNMIRIVRNDFRDKIIISPGVGAQGAMIGDAICNGADYEIIGRSIYESKDPVTETKKIIETQEVKINECKRTEN.

Residues Asp6, Lys25, 52-61 (DLKLADIDNT), Ser109, 158-168 (PGVGAQGAMIG), Gly181, and Arg182 contribute to the substrate site. Residue Lys54 is the Proton donor of the active site.

It belongs to the OMP decarboxylase family. Type 1 subfamily. As to quaternary structure, homodimer.

It carries out the reaction orotidine 5'-phosphate + H(+) = UMP + CO2. It functions in the pathway pyrimidine metabolism; UMP biosynthesis via de novo pathway; UMP from orotate: step 2/2. In terms of biological role, catalyzes the decarboxylation of orotidine 5'-monophosphate (OMP) to uridine 5'-monophosphate (UMP). The sequence is that of Orotidine 5'-phosphate decarboxylase from Sulfurisphaera tokodaii (strain DSM 16993 / JCM 10545 / NBRC 100140 / 7) (Sulfolobus tokodaii).